The chain runs to 188 residues: dTTP/UTP pyrophosphatase (188 aa).

The Proton acceptor role is filled by Asp70.

The protein belongs to the Maf family. YhdE subfamily. The cofactor is a divalent metal cation.

It is found in the cytoplasm. It catalyses the reaction dTTP + H2O = dTMP + diphosphate + H(+). The catalysed reaction is UTP + H2O = UMP + diphosphate + H(+). In terms of biological role, nucleoside triphosphate pyrophosphatase that hydrolyzes dTTP and UTP. May have a dual role in cell division arrest and in preventing the incorporation of modified nucleotides into cellular nucleic acids. This is dTTP/UTP pyrophosphatase from Clostridium botulinum (strain Alaska E43 / Type E3).